The chain runs to 215 residues: Cytochrome b6 (215 aa).

The chain crosses the membrane as a helical span at residues 32–52 (IFYCFGGITFTCFLVQVATGF). C35 provides a ligand contact to heme c. Residues H86 and H100 each contribute to the heme b site. 3 helical membrane passes run 90-110 (ASMMVLMMILHIFRVYLTGGF), 116-136 (LTWVTGVLMAVCTVSFGVTGY), and 186-206 (LHTFVLPLFTAVFMLMHFLMI). Residues H187 and H202 each contribute to the heme b site.

Belongs to the cytochrome b family. PetB subfamily. As to quaternary structure, the 4 large subunits of the cytochrome b6-f complex are cytochrome b6, subunit IV (17 kDa polypeptide, PetD), cytochrome f and the Rieske protein, while the 4 small subunits are PetG, PetL, PetM and PetN. The complex functions as a dimer. Heme b serves as cofactor. Heme c is required as a cofactor.

Its subcellular location is the plastid. The protein localises to the chloroplast thylakoid membrane. Component of the cytochrome b6-f complex, which mediates electron transfer between photosystem II (PSII) and photosystem I (PSI), cyclic electron flow around PSI, and state transitions. The protein is Cytochrome b6 of Auxenochlorella protothecoides (Green microalga).